Consider the following 151-residue polypeptide: 3-hydroxyacyl-[acyl-carrier-protein] dehydratase FabZ (151 aa).

Histidine 54 is a catalytic residue.

This sequence belongs to the thioester dehydratase family. FabZ subfamily.

It is found in the cytoplasm. The enzyme catalyses a (3R)-hydroxyacyl-[ACP] = a (2E)-enoyl-[ACP] + H2O. In terms of biological role, involved in unsaturated fatty acids biosynthesis. Catalyzes the dehydration of short chain beta-hydroxyacyl-ACPs and long chain saturated and unsaturated beta-hydroxyacyl-ACPs. The sequence is that of 3-hydroxyacyl-[acyl-carrier-protein] dehydratase FabZ from Sodalis glossinidius (strain morsitans).